A 359-amino-acid chain; its full sequence is Probable dual-specificity RNA methyltransferase RlmN (359 aa).

Residue Glu93 is the Proton acceptor of the active site. In terms of domain architecture, Radical SAM core spans 107-337 (KSERVTLCVS…VTMRYEKGHD (231 aa)). Cys114 and Cys342 form a disulfide bridge. Positions 121, 125, and 128 each coordinate [4Fe-4S] cluster. Residues 168–169 (GE), Ser200, 223–225 (SLH), and Asn299 each bind S-adenosyl-L-methionine. Catalysis depends on Cys342, which acts as the S-methylcysteine intermediate.

This sequence belongs to the radical SAM superfamily. RlmN family. The cofactor is [4Fe-4S] cluster.

Its subcellular location is the cytoplasm. It carries out the reaction adenosine(2503) in 23S rRNA + 2 reduced [2Fe-2S]-[ferredoxin] + 2 S-adenosyl-L-methionine = 2-methyladenosine(2503) in 23S rRNA + 5'-deoxyadenosine + L-methionine + 2 oxidized [2Fe-2S]-[ferredoxin] + S-adenosyl-L-homocysteine. It catalyses the reaction adenosine(37) in tRNA + 2 reduced [2Fe-2S]-[ferredoxin] + 2 S-adenosyl-L-methionine = 2-methyladenosine(37) in tRNA + 5'-deoxyadenosine + L-methionine + 2 oxidized [2Fe-2S]-[ferredoxin] + S-adenosyl-L-homocysteine. Functionally, specifically methylates position 2 of adenine 2503 in 23S rRNA and position 2 of adenine 37 in tRNAs. This chain is Probable dual-specificity RNA methyltransferase RlmN, found in Akkermansia muciniphila (strain ATCC BAA-835 / DSM 22959 / JCM 33894 / BCRC 81048 / CCUG 64013 / CIP 107961 / Muc).